A 510-amino-acid polypeptide reads, in one-letter code: MNTTETSRAAAPLVLILGLGETGVAAARWCARQGSPLRVADTRAQPGGLAALQAALADATVEYRLGCGEQFPPDLLDGVAQIVLSPGLVPHESPTRELLEQARERNVEVVGEIELFARALAGLAESREYRPRVLAITGTNGKTTVTALTRQLIEAGGMSARAAGNISPAALAALIDALDQDDLPQVWVLELSSFQLETTRTLAPDAAVVLNVTQDHLDWHGDMQAYAQAKARILKPARLAIVNRDDPLTVAMVESLQALNVRSFGRDVPALVGDMGLELGQGVAWLTACESNDFDEPAPAPRRKKDAPPPTRAGGRMSRLMPVDALRIRGVHNALNALAAMQLARSLDLGWGPMLRTLRDYAGEPHRAELVRSIGDVDYINDSKGTNVGATVAALEGLGQQVVLIAGGQGKGQDFSPLVPVVRRHARAVVLIGVDGAAIGKVLEPTGVPCVAAADMREAVRRAAELAQPGDAVLLSPACASFDMFRNYPHRGEVFAAEVQELALDRGEVA.

An ATP-binding site is contributed by glycine 138–threonine 144. Residues phenylalanine 294–arginine 316 form a disordered region.

This sequence belongs to the MurCDEF family.

The protein localises to the cytoplasm. It catalyses the reaction UDP-N-acetyl-alpha-D-muramoyl-L-alanine + D-glutamate + ATP = UDP-N-acetyl-alpha-D-muramoyl-L-alanyl-D-glutamate + ADP + phosphate + H(+). Its pathway is cell wall biogenesis; peptidoglycan biosynthesis. Its function is as follows. Cell wall formation. Catalyzes the addition of glutamate to the nucleotide precursor UDP-N-acetylmuramoyl-L-alanine (UMA). The sequence is that of UDP-N-acetylmuramoylalanine--D-glutamate ligase from Bordetella bronchiseptica (strain ATCC BAA-588 / NCTC 13252 / RB50) (Alcaligenes bronchisepticus).